Consider the following 309-residue polypeptide: Ribokinase (309 aa).

Substrate contacts are provided by residues 14–16 (NAD), 42–46 (GKGAN), and E143. ATP is bound by residues N187 and 223-228 (TLGSRG). Positions 249 and 251 each coordinate K(+). Residues 254 to 255 (GD) and H279 each bind ATP. D255 is a binding site for substrate. The Proton acceptor role is filled by D255. K(+)-binding residues include A285, R288, G290, and S294.

The protein belongs to the carbohydrate kinase PfkB family. Ribokinase subfamily. In terms of assembly, homodimer. The cofactor is Mg(2+).

The protein localises to the cytoplasm. The enzyme catalyses D-ribose + ATP = D-ribose 5-phosphate + ADP + H(+). Its pathway is carbohydrate metabolism; D-ribose degradation; D-ribose 5-phosphate from beta-D-ribopyranose: step 2/2. With respect to regulation, activated by a monovalent cation that binds near, but not in, the active site. The most likely occupant of the site in vivo is potassium. Ion binding induces a conformational change that may alter substrate affinity. Functionally, catalyzes the phosphorylation of ribose at O-5 in a reaction requiring ATP and magnesium. The resulting D-ribose-5-phosphate can then be used either for sythesis of nucleotides, histidine, and tryptophan, or as a component of the pentose phosphate pathway. The chain is Ribokinase from Escherichia coli O157:H7.